The primary structure comprises 324 residues: MQKPQLLVPIIATSNGNLVHAAYFLLVGIPGLGPTIHFWLAFPLCFMYALATLGNLTIVLIIRVERRLHEPMYLFLAMLSTIDLVLSSITMPKMASLFLMGIQEIEFNICLAQMFLIHALSAVESAVLLAMAFDRFVAICHPLRHASVLTGCTVAKIGLSALTRGFVFFFPLPFILKWLSYCQTHTVTHSFCLHQDIMKLSCTDTRVNVVYGLFIILSVMGVDSLFIGFSYILILWAVLELSSRRAALKAFNTCISHLCAVLVFYVPLIGLSVVHRLGGPTSLLHVVMANTYLLLPPVVNPLVYGAKTKEICSRVLCMFSQGGK.

The Extracellular portion of the chain corresponds to 1 to 38 (MQKPQLLVPIIATSNGNLVHAAYFLLVGIPGLGPTIHF). The chain crosses the membrane as a helical span at residues 39 to 59 (WLAFPLCFMYALATLGNLTIV). At 60 to 67 (LIIRVERR) the chain is on the cytoplasmic side. Residues 68–88 (LHEPMYLFLAMLSTIDLVLSS) traverse the membrane as a helical segment. The Extracellular segment spans residues 89-112 (ITMPKMASLFLMGIQEIEFNICLA). Residues Cys-110 and Cys-202 are joined by a disulfide bond. A helical transmembrane segment spans residues 113–133 (QMFLIHALSAVESAVLLAMAF). Residues 134 to 152 (DRFVAICHPLRHASVLTGC) are Cytoplasmic-facing. Residues 153 to 173 (TVAKIGLSALTRGFVFFFPLP) form a helical membrane-spanning segment. Residues 174–209 (FILKWLSYCQTHTVTHSFCLHQDIMKLSCTDTRVNV) are Extracellular-facing. A helical transmembrane segment spans residues 210–230 (VYGLFIILSVMGVDSLFIGFS). At 231–250 (YILILWAVLELSSRRAALKA) the chain is on the cytoplasmic side. Residues 251–271 (FNTCISHLCAVLVFYVPLIGL) traverse the membrane as a helical segment. The Extracellular portion of the chain corresponds to 272–285 (SVVHRLGGPTSLLH). The chain crosses the membrane as a helical span at residues 286 to 306 (VVMANTYLLLPPVVNPLVYGA). At 307–324 (KTKEICSRVLCMFSQGGK) the chain is on the cytoplasmic side.

This sequence belongs to the G-protein coupled receptor 1 family.

It is found in the cell membrane. Its function is as follows. Odorant receptor. This Homo sapiens (Human) protein is Olfactory receptor 51D1 (OR51D1).